The chain runs to 103 residues: Large ribosomal subunit protein uL24 (103 aa).

Belongs to the universal ribosomal protein uL24 family. Part of the 50S ribosomal subunit.

In terms of biological role, one of two assembly initiator proteins, it binds directly to the 5'-end of the 23S rRNA, where it nucleates assembly of the 50S subunit. One of the proteins that surrounds the polypeptide exit tunnel on the outside of the subunit. This chain is Large ribosomal subunit protein uL24, found in Actinobacillus succinogenes (strain ATCC 55618 / DSM 22257 / CCUG 43843 / 130Z).